The primary structure comprises 727 residues: NADH-ubiquinone oxidoreductase 75 kDa subunit, mitochondrial (727 aa).

Residues 1 to 23 (MLRIPVRKALVGLSKSPKGCVRT) constitute a mitochondrion transit peptide. The 2Fe-2S ferredoxin-type domain maps to 30–108 (NLIEVFVDGQ…GWNILTNSEK (79 aa)). Residues cysteine 64, cysteine 75, and cysteine 78 each contribute to the [2Fe-2S] cluster site. Lysine 84 carries the post-translational modification N6-acetyllysine. Cysteine 92 lines the [2Fe-2S] cluster pocket. Positions 108-147 (KSKKAREGVMEFLLANHPLDCPICDQGGECDLQDQSMMFG) constitute a 4Fe-4S His(Cys)3-ligated-type domain. [4Fe-4S] cluster-binding residues include histidine 124, cysteine 128, cysteine 131, cysteine 137, cysteine 176, cysteine 179, cysteine 182, and cysteine 226. One can recognise a 4Fe-4S Mo/W bis-MGD-type domain in the interval 245 to 301 (TRKTESIDVMDAVGSNIVVSTRTGEVMRILPRMHEDINEEWISDKTRFAYDGLKRQR). N6-acetyllysine occurs at positions 467, 499, and 709.

This sequence belongs to the complex I 75 kDa subunit family. As to quaternary structure, core subunit of respiratory chain NADH dehydrogenase (Complex I) which is composed of 45 different subunits. This is the largest subunit of complex I and it is a component of the iron-sulfur (IP) fragment of the enzyme. Complex I associates with ubiquinol-cytochrome reductase complex (Complex III) to form supercomplexes. Interacts with MDM2 and AKAP1. Requires [2Fe-2S] cluster as cofactor. [4Fe-4S] cluster serves as cofactor.

The protein resides in the mitochondrion inner membrane. The catalysed reaction is a ubiquinone + NADH + 5 H(+)(in) = a ubiquinol + NAD(+) + 4 H(+)(out). Core subunit of the mitochondrial membrane respiratory chain NADH dehydrogenase (Complex I) which catalyzes electron transfer from NADH through the respiratory chain, using ubiquinone as an electron acceptor. Essential for catalysing the entry and efficient transfer of electrons within complex I. Plays a key role in the assembly and stability of complex I and participates in the association of complex I with ubiquinol-cytochrome reductase complex (Complex III) to form supercomplexes. This Macaca fascicularis (Crab-eating macaque) protein is NADH-ubiquinone oxidoreductase 75 kDa subunit, mitochondrial (NDUFS1).